We begin with the raw amino-acid sequence, 280 residues long: MGEKAILDLHLVSDSTCETVVSVARAAVEHFKSLEVNEFVWSLVGSKSHVDRIISSIDRKRNNLIMYTVLDDDLREYLKKKAEAYNIRCIPILSHIIREISCYLSVAKDPNAHPHRLSDEYFNRIEAINYTIAHDDGQSLWDIDGADIIIVGVSRTSKSPTSIYLAYRGYKVVNIPFVHSITLPIDSAALADKLVVGLTIDIDRLIQIRRNRLISMKNQSNCNYISYEQVEQEISEVNRICMKNQWPLIDVTQKSIEETAATIIQFFNRKNNKIGGDAFC.

Residue 152-159 (GVSRTSKS) coordinates ADP.

It belongs to the pyruvate, phosphate/water dikinase regulatory protein family. PDRP subfamily.

The enzyme catalyses N(tele)-phospho-L-histidyl/L-threonyl-[pyruvate, phosphate dikinase] + ADP = N(tele)-phospho-L-histidyl/O-phospho-L-threonyl-[pyruvate, phosphate dikinase] + AMP + H(+). The catalysed reaction is N(tele)-phospho-L-histidyl/O-phospho-L-threonyl-[pyruvate, phosphate dikinase] + phosphate + H(+) = N(tele)-phospho-L-histidyl/L-threonyl-[pyruvate, phosphate dikinase] + diphosphate. In terms of biological role, bifunctional serine/threonine kinase and phosphorylase involved in the regulation of the pyruvate, phosphate dikinase (PPDK) by catalyzing its phosphorylation/dephosphorylation. In Anaplasma phagocytophilum (strain HZ), this protein is Putative pyruvate, phosphate dikinase regulatory protein.